Consider the following 116-residue polypeptide: Large ribosomal subunit protein uL18 (116 aa).

Belongs to the universal ribosomal protein uL18 family. Part of the 50S ribosomal subunit; part of the 5S rRNA/L5/L18/L25 subcomplex. Contacts the 5S and 23S rRNAs.

In terms of biological role, this is one of the proteins that bind and probably mediate the attachment of the 5S RNA into the large ribosomal subunit, where it forms part of the central protuberance. In Cellvibrio japonicus (strain Ueda107) (Pseudomonas fluorescens subsp. cellulosa), this protein is Large ribosomal subunit protein uL18.